Reading from the N-terminus, the 33-residue chain is uncharacterized protein (33 aa).

This is an uncharacterized protein from Archaeoglobus fulgidus (strain ATCC 49558 / DSM 4304 / JCM 9628 / NBRC 100126 / VC-16).